Here is a 229-residue protein sequence, read N- to C-terminus: 2,3-bisphosphoglycerate-dependent phosphoglycerate mutase (229 aa).

Residues 8–15 (RHGESAWN), 21–22 (TG), R60, 87–90 (ERHY), K98, 114–115 (RR), and 183–184 (GN) contribute to the substrate site. H9 serves as the catalytic Tele-phosphohistidine intermediate. E87 serves as the catalytic Proton donor/acceptor.

Belongs to the phosphoglycerate mutase family. BPG-dependent PGAM subfamily. In terms of assembly, homodimer.

The catalysed reaction is (2R)-2-phosphoglycerate = (2R)-3-phosphoglycerate. It participates in carbohydrate degradation; glycolysis; pyruvate from D-glyceraldehyde 3-phosphate: step 3/5. In terms of biological role, catalyzes the interconversion of 2-phosphoglycerate and 3-phosphoglycerate. This Polynucleobacter asymbioticus (strain DSM 18221 / CIP 109841 / QLW-P1DMWA-1) (Polynucleobacter necessarius subsp. asymbioticus) protein is 2,3-bisphosphoglycerate-dependent phosphoglycerate mutase.